Consider the following 398-residue polypeptide: ATP-dependent RNA helicase eIF4A (398 aa).

Positions 25 to 53 match the Q motif motif; sequence DSFDAMNLRAELLRGVYAYGFERPSAIQQ. Residues 56-226 form the Helicase ATP-binding domain; the sequence is IMPVIKGSDV…TKFMRDPVRI (171 aa). Position 69–76 (69–76) interacts with ATP; that stretch reads AQSGTGKT. Positions 174 to 177 match the DEAD box motif; that stretch reads DEAD. The Helicase C-terminal domain maps to 237-398; it reads GIKQFYIAVE…EMPMNVADLI (162 aa).

This sequence belongs to the DEAD box helicase family. eIF4A subfamily. As to quaternary structure, component of the eIF4F complex, which composition varies with external and internal environmental conditions. It is composed of at least eIF4A, eIF4E and eIF4G.

The protein resides in the cytoplasm. The catalysed reaction is ATP + H2O = ADP + phosphate + H(+). ATP-dependent RNA helicase which is a subunit of the eIF4F complex involved in cap recognition and is required for mRNA binding to ribosome. In the current model of translation initiation, eIF4A unwinds RNA secondary structures in the 5'-UTR of mRNAs which is necessary to allow efficient binding of the small ribosomal subunit, and subsequent scanning for the initiator codon. This is ATP-dependent RNA helicase eIF4A (TIF1) from Coccidioides immitis (strain RS) (Valley fever fungus).